Here is a 72-residue protein sequence, read N- to C-terminus: Translation initiation factor IF-1 (72 aa).

The region spanning 1-72 (MAKEEQIELE…TKGRITFRMK (72 aa)) is the S1-like domain.

Belongs to the IF-1 family. As to quaternary structure, component of the 30S ribosomal translation pre-initiation complex which assembles on the 30S ribosome in the order IF-2 and IF-3, IF-1 and N-formylmethionyl-tRNA(fMet); mRNA recruitment can occur at any time during PIC assembly.

Its subcellular location is the cytoplasm. Its function is as follows. One of the essential components for the initiation of protein synthesis. Stabilizes the binding of IF-2 and IF-3 on the 30S subunit to which N-formylmethionyl-tRNA(fMet) subsequently binds. Helps modulate mRNA selection, yielding the 30S pre-initiation complex (PIC). Upon addition of the 50S ribosomal subunit IF-1, IF-2 and IF-3 are released leaving the mature 70S translation initiation complex. This chain is Translation initiation factor IF-1, found in Alcanivorax borkumensis (strain ATCC 700651 / DSM 11573 / NCIMB 13689 / SK2).